The sequence spans 245 residues: Demethylmenaquinone methyltransferase (245 aa).

S-adenosyl-L-methionine-binding positions include T62, D80, 105 to 106 (DA), and S122.

The protein belongs to the class I-like SAM-binding methyltransferase superfamily. MenG/UbiE family.

It carries out the reaction a 2-demethylmenaquinol + S-adenosyl-L-methionine = a menaquinol + S-adenosyl-L-homocysteine + H(+). It participates in quinol/quinone metabolism; menaquinone biosynthesis; menaquinol from 1,4-dihydroxy-2-naphthoate: step 2/2. Its function is as follows. Methyltransferase required for the conversion of demethylmenaquinol (DMKH2) to menaquinol (MKH2). This is Demethylmenaquinone methyltransferase from Clavibacter sepedonicus (Clavibacter michiganensis subsp. sepedonicus).